Consider the following 572-residue polypeptide: Frizzled-7 (572 aa).

An N-terminal signal peptide occupies residues 1–32 (MRGPGTAASHSPLGLCALVLALLGALPTDTRA). The Extracellular portion of the chain corresponds to 33–254 (QPYHGEKGIS…EEERRFARLW (222 aa)). The FZ domain occupies 44-163 (PDHGFCQPIS…HGAGEICVGQ (120 aa)). 5 cysteine pairs are disulfide-bonded: Cys-49–Cys-110, Cys-57–Cys-103, Cys-94–Cys-131, Cys-120–Cys-160, and Cys-124–Cys-148. N-linked (GlcNAc...) asparagine glycosylation is present at Asn-63. A glycan (N-linked (GlcNAc...) asparagine) is linked at Asn-164. The helical transmembrane segment at 255–275 (VGVWSVLCCASTLFTVLTYLV) threads the bilayer. Topologically, residues 276 to 286 (DMRRFSYPERP) are cytoplasmic. The chain crosses the membrane as a helical span at residues 287–307 (IIFLSGCYFMVAVAHVAGFLL). Topologically, residues 308 to 334 (EDRAVCVERFSDDGYRTVAQGTKKEGC) are extracellular. Residues 335-355 (TILFMVLYFFGMASSIWWVIL) form a helical membrane-spanning segment. At 356-377 (SLTWFLAAGMKWGHEAIEANSQ) the chain is on the cytoplasmic side. A helical transmembrane segment spans residues 378–398 (YFHLAAWAVPAVKTITILAMG). Over 399 to 421 (QVDGDLLSGVCYVGLSSVDALRG) the chain is Extracellular. Residues 422 to 442 (FVLAPLFVYLFIGTSFLLAGF) traverse the membrane as a helical segment. The Cytoplasmic segment spans residues 443–468 (VSLFRIRTIMKHDGTKTEKLEKLMVR). The helical transmembrane segment at 469 to 489 (IGVFSVLYTVPATIVLACYFY) threads the bilayer. Residues 490-526 (EQAFREHWERTWLLQTCKSYAVPCPPGHFSPMSPDFT) are Extracellular-facing. Residues 527-547 (VFMIKYLMTMIVGITTGFWIW) form a helical membrane-spanning segment. Topologically, residues 548–572 (SGKTLQSWRRFYHRLSHSSKGETAV) are cytoplasmic. The short motif at 550–555 (KTLQSW) is the Lys-Thr-X-X-X-Trp motif, mediates interaction with the PDZ domain of Dvl family members element. Residues 570–572 (TAV) carry the PDZ-binding motif.

The protein belongs to the G-protein coupled receptor Fz/Smo family. As to quaternary structure, interacts with MAGI3. Interacts with DVL1. Interacts with CCDC88C/DAPLE; the interaction displaces DVL1 from FZD7, leading to inhibition of canonical Wnt signaling and triggering of non-canonical Wnt responses. Interacts with MYOC. Binds to SDCBP; this interaction is increased by inositol trisphosphate (IP3). Interacts with glypican GPC3. Ubiquitinated by ZNRF3, leading to its degradation by the proteasome.

The protein resides in the cell membrane. It localises to the endosome membrane. Functionally, receptor for Wnt proteins. Most frizzled receptors are coupled to the beta-catenin canonical signaling pathway, which leads to the activation of disheveled proteins, inhibition of GSK-3 kinase, nuclear accumulation of beta-catenin and activation of Wnt target genes. A second signaling pathway involving PKC and calcium fluxes has been seen for some family members, but it is not yet clear if it represents a distinct pathway or if it can be integrated in the canonical pathway, as PKC seems to be required for Wnt-mediated inactivation of GSK-3 kinase. Both pathways seem to involve interactions with G-proteins. Activation by WNT8 induces expression of beta-catenin target genes. Following ligand activation, binds to CCDC88C/DAPLE which displaces DVL1 from FZD7 and leads to inhibition of canonical Wnt signaling, activation of G-proteins by CCDC88C and triggering of non-canonical Wnt responses. May be involved in transduction and intercellular transmission of polarity information during tissue morphogenesis and/or in differentiated tissues. In Mus musculus (Mouse), this protein is Frizzled-7 (Fzd7).